A 129-amino-acid chain; its full sequence is Cuticle protein 12.5 (129 aa).

Tandem repeats lie at residues 7-10 (AAPA), 15-18 (AAPA), 23-26 (AAPA), 28-31 (AAPV), 37-40 (AAPA), 67-70 (AAPA), 79-82 (AAPA), 91-94 (AAPA), 103-106 (AAPA), and 117-120 (AAPA).

Its function is as follows. Component of the cuticle of migratory locust which contains more than 100 different structural proteins. In Locusta migratoria (Migratory locust), this protein is Cuticle protein 12.5.